A 238-amino-acid polypeptide reads, in one-letter code: COMM domain-containing protein 10 homolog Vlet (238 aa).

The segment covering 43–77 (ASASATSSTVGTSVTTTGRVDSSTEENPTSNTEPE) has biased composition (low complexity). The interval 43-78 (ASASATSSTVGTSVTTTGRVDSSTEENPTSNTEPEY) is disordered. The 65-residue stretch at 161–225 (VIEDVAWKLN…SIQGELDAML (65 aa)) folds into the COMM domain.

Belongs to the COMM domain-containing protein 10 family. Component of the commander complex consisting of the CCC subcomplex and the retriever subcomplex. Component of the CCC subcomplex. Interacts with Smn; along with Sbat and Hez may form an accessory subcomplex involved in SMN complex function.

Its function is as follows. Scaffold protein in the commander complex that is essential for endosomal recycling of transmembrane cargos; the commander complex is composed of the CCC subcomplex and the retriever subcomplex. May modulate activity of cullin-RING E3 ubiquitin ligase (CRL) complexes. May down-regulate activation of NF-kappa-B. May have an accessory function in the survival motor neuron (SMN) complex. Required for neuromuscular function and organismal viability. In Drosophila melanogaster (Fruit fly), this protein is COMM domain-containing protein 10 homolog Vlet.